The primary structure comprises 241 residues: MANTTITWLGHASFLFVTPEGKRIVLDPWYEGNPSFPESAKAELEHVDAILLTHGHMDHTGNAITLAQQTKAPVAGIVELIGWVQGQGVDATQCIGFNKGGCIELAGIKATLTTAHHSSSISSGSISLYLGDPCGFILEFSDGCVVYHTGDTCVHGDMALMGEIYQPNVTILPIGDFYTMGPRQAAHALKLIGSKFAIPEHYGTFPALHGNPEALQSELNKLQLNTAIVALQPGEAWTYPA.

Belongs to the UPF0173 family.

The protein is UPF0173 metal-dependent hydrolase Haur_4333 of Herpetosiphon aurantiacus (strain ATCC 23779 / DSM 785 / 114-95).